Consider the following 189-residue polypeptide: Chitin synthase 2 (189 aa).

Belongs to the chitin synthase family. Class II subfamily.

It localises to the cell membrane. It carries out the reaction [(1-&gt;4)-N-acetyl-beta-D-glucosaminyl](n) + UDP-N-acetyl-alpha-D-glucosamine = [(1-&gt;4)-N-acetyl-beta-D-glucosaminyl](n+1) + UDP + H(+). Its function is as follows. Polymerizes chitin, a structural polymer of the cell wall and septum, by transferring the sugar moiety of UDP-GlcNAc to the non-reducing end of the growing chitin polymer. The protein is Chitin synthase 2 (chs2) of Aspergillus niger.